A 330-amino-acid chain; its full sequence is Protoheme IX farnesyltransferase (330 aa).

The next 9 membrane-spanning stretches (helical) occupy residues 33 to 53 (VMTLVVFTAFAGLIAAPVDAD), 54 to 74 (PFLAFMSILCLAVGAGAAGAL), 101 to 121 (VSNAYGFGVVASILSVLLMAL), 126 to 146 (LAAGLLAFSIFFYAVIYTMIL), 154 to 174 (IVIGGAAGAFPPMIGWVAATG), 180 to 200 (AVILFMIIFLWTPPHSWALAL), 227 to 247 (ILLYSIVLVIFAGAPVLTGLG), 250 to 270 (VYGATSLGGGALFLLLAWRIF), and 308 to 328 (VLFAALIVEHAFGAYVAIPGV).

It belongs to the UbiA prenyltransferase family. Protoheme IX farnesyltransferase subfamily. In terms of assembly, interacts with CtaA.

The protein localises to the cell inner membrane. The catalysed reaction is heme b + (2E,6E)-farnesyl diphosphate + H2O = Fe(II)-heme o + diphosphate. Its pathway is porphyrin-containing compound metabolism; heme O biosynthesis; heme O from protoheme: step 1/1. Functionally, converts heme B (protoheme IX) to heme O by substitution of the vinyl group on carbon 2 of heme B porphyrin ring with a hydroxyethyl farnesyl side group. The sequence is that of Protoheme IX farnesyltransferase from Maricaulis maris (strain MCS10) (Caulobacter maris).